The primary structure comprises 1332 residues: DEMETER-like protein 2 (1332 aa).

The span at 1-23 shows a compositional bias: basic and acidic residues; the sequence is MEVEGEVREKEARVKGRQPETEV. Disordered regions lie at residues 1–29, 137–242, and 280–317; these read MEVE…GLPQ, VSTS…TSEE, and VEGS…KKTD. A compositionally biased stretch (polar residues) spans 137–153; the sequence is VSTSTQRTEPESPQITL. Residues 223–236 are compositionally biased toward low complexity; that stretch reads SKAGIKKSSIAATA. The span at 301–312 shows a compositional bias: basic residues; it reads PKGRRGQRRSNG. Positions 497–595 are DEMETER; it reads KVQLDPETSR…AYMDLAAEFP (99 aa). Positions 739–753 are enriched in polar residues; the sequence is HQQDPESTIQTQDQQ. Residues 739 to 810 form a disordered region; it reads HQQDPESTIQ…GGRKRERTER (72 aa). Residues 763–777 are compositionally biased toward basic residues; it reads KNRKKPTTSKPKKKS. The segment covering 787-810 has biased composition (basic and acidic residues); it reads KSVDWDSLRKEAESGGRKRERTER. [4Fe-4S] cluster-binding residues include Cys-970, Cys-977, Cys-980, and Cys-986.

This sequence belongs to the DNA glycosylase family. DEMETER subfamily. The cofactor is [4Fe-4S] cluster.

Its subcellular location is the nucleus. Potential transcriptional activator that may act by nicking the target promoter. Catalyzes the release of 5-methylcytosine (5-meC) from DNA by a glycosylase/lyase mechanism. In Arabidopsis thaliana (Mouse-ear cress), this protein is DEMETER-like protein 2 (DML2).